Here is a 462-residue protein sequence, read N- to C-terminus: ATP synthase subunit beta (462 aa).

150-157 (GGAGVGKT) serves as a coordination point for ATP.

The protein belongs to the ATPase alpha/beta chains family. As to quaternary structure, F-type ATPases have 2 components, CF(1) - the catalytic core - and CF(0) - the membrane proton channel. CF(1) has five subunits: alpha(3), beta(3), gamma(1), delta(1), epsilon(1). CF(0) has three main subunits: a(1), b(2) and c(9-12). The alpha and beta chains form an alternating ring which encloses part of the gamma chain. CF(1) is attached to CF(0) by a central stalk formed by the gamma and epsilon chains, while a peripheral stalk is formed by the delta and b chains. In this bacterium the a and b subunits are transcribed but do not seem to be translated, thus the ATP synthase consists of the alpha, beta, gamma, delta, epsilon and c subunits.

It is found in the cell membrane. The catalysed reaction is ATP + H2O + 4 H(+)(in) = ADP + phosphate + 5 H(+)(out). Its function is as follows. Produces ATP from ADP in the presence of a proton gradient across the membrane. The catalytic sites are hosted primarily by the beta subunits. The sequence is that of ATP synthase subunit beta from Moorella thermoacetica (strain ATCC 39073 / JCM 9320).